The sequence spans 255 residues: AA9 family lytic polysaccharide monooxygenase D (255 aa).

The signal sequence occupies residues 1-19 (MYRTLGSIALLAGGAAAHG). Residues histidine 18 and histidine 92 each contribute to the Cu(2+) site. 2 disulfide bridges follow: cysteine 65/cysteine 189 and cysteine 104/cysteine 111. The N-linked (GlcNAc...) asparagine glycan is linked to asparagine 152. O2 contacts are provided by histidine 178 and glutamine 184. Residue tyrosine 186 participates in Cu(2+) binding. An N-linked (GlcNAc...) asparagine glycan is attached at asparagine 220.

This sequence belongs to the polysaccharide monooxygenase AA9 family. Cu(2+) serves as cofactor.

It is found in the secreted. The enzyme catalyses [(1-&gt;4)-beta-D-glucosyl]n+m + reduced acceptor + O2 = 4-dehydro-beta-D-glucosyl-[(1-&gt;4)-beta-D-glucosyl]n-1 + [(1-&gt;4)-beta-D-glucosyl]m + acceptor + H2O.. Its function is as follows. Lytic polysaccharide monooxygenase (LPMO) that depolymerizes crystalline and amorphous polysaccharides via the oxidation of scissile alpha- or beta-(1-4)-glycosidic bonds, yielding specifically C1 oxidation product. Catalysis by LPMOs requires the reduction of the active-site copper from Cu(II) to Cu(I) by a reducing agent and H(2)O(2) or O(2) as a cosubstrate. Is active on regenerated amorphous cellulose (RAC) in the presence of ascorbic acid or 3-methylcatechol. Also acts on phosphoric acid swollen cellulose (PASC) as a substrate. The polypeptide is AA9 family lytic polysaccharide monooxygenase D (Thermothelomyces thermophilus (strain ATCC 42464 / BCRC 31852 / DSM 1799) (Sporotrichum thermophile)).